A 396-amino-acid polypeptide reads, in one-letter code: 3-amino-4-hydroxybenzoic acid synthase (396 aa).

Residues 1 to 29 (MSSSPSPSPSSSSSSSASSSASSSPSSSS) are disordered.

Belongs to the archaeal-type DHQ synthase family. GriH subfamily. As to quaternary structure, monomer. It depends on Mn(2+) as a cofactor.

It catalyses the reaction 2-amino-4,5-dihydroxy-6-oxo-7-(phosphooxy)heptanoate = 3-amino-4-hydroxybenzoate + phosphate + 2 H2O + H(+). Its function is as follows. Catalyzes the cyclization of 2-amino-4,5-dihydroxy-6-one-heptanoic acid-7-phosphate to yield 3-amino-4-hydroxybenzoic acid (3,4-AHBA). The chain is 3-amino-4-hydroxybenzoic acid synthase (griH) from Streptomyces griseus subsp. griseus (strain JCM 4626 / CBS 651.72 / NBRC 13350 / KCC S-0626 / ISP 5235).